The sequence spans 370 residues: Probable aspartic-type endopeptidase ARB_04018 (370 aa).

A signal peptide spans 1–21 (MWHSPFSTAFTLFLGFFTLTL). N80 and N102 each carry an N-linked (GlcNAc...) asparagine glycan. In terms of domain architecture, Peptidase A1 spans 94–367 (FVNEITIGND…DHDGPKMGFA (274 aa)). The active site involves D110. An N-linked (GlcNAc...) asparagine glycan is attached at N251. D261 is an active-site residue. N298 is a glycosylation site (N-linked (GlcNAc...) asparagine).

Belongs to the peptidase A1 family.

It localises to the secreted. Functionally, probable aspartic-type endopeptidase which contributes to virulence. The polypeptide is Probable aspartic-type endopeptidase ARB_04018 (Arthroderma benhamiae (strain ATCC MYA-4681 / CBS 112371) (Trichophyton mentagrophytes)).